Consider the following 318-residue polypeptide: Methionyl-tRNA formyltransferase (318 aa).

Residue Ser-112 to Pro-115 participates in (6S)-5,6,7,8-tetrahydrofolate binding.

This sequence belongs to the Fmt family.

It catalyses the reaction L-methionyl-tRNA(fMet) + (6R)-10-formyltetrahydrofolate = N-formyl-L-methionyl-tRNA(fMet) + (6S)-5,6,7,8-tetrahydrofolate + H(+). Functionally, attaches a formyl group to the free amino group of methionyl-tRNA(fMet). The formyl group appears to play a dual role in the initiator identity of N-formylmethionyl-tRNA by promoting its recognition by IF2 and preventing the misappropriation of this tRNA by the elongation apparatus. The protein is Methionyl-tRNA formyltransferase of Haemophilus influenzae (strain PittGG).